A 232-amino-acid polypeptide reads, in one-letter code: Protein TIFY 10c (232 aa).

Residues 54-73 form a disordered region; it reads PPAAGAGGAFRPPPTTMNLL. The Tify domain occupies 114 to 149; that stretch reads AGEKAQQLTIFYGGKVVVFENFPSTKVKDLLQIVST. Positions 151 to 176 are disordered; that stretch reads DGVDKNTGTAATQSLPRPAHNSLPDL. Residues 156–165 are compositionally biased toward polar residues; it reads NTGTAATQSL. The Jas motif lies at 177–202; it reads PIARRNSLHRFLEKRKGRMNANAPYQ. Positions 179-186 match the Nuclear localization signal motif; the sequence is ARRNSLHR.

This sequence belongs to the TIFY/JAZ family. In terms of assembly, interacts with BHLH148. Interacts with COI1B in a coronatine-dependent manner. Coronatine is an analog of jasmonoyl isoleucine (JA-Ile). Interacts with TIFY5/JAZ2, TIFY6B/JAZ4, TIFY9/JAZ5, TIFY11A, TIFY11D/JAZ12 and TIFY11G/JAZ15. Post-translationally, ubiquitinated. Increase in jasmonoyl isoleucine (JA-Ile) levels mediates its degradation via COI1B-mediated proteasome pathway.

The protein resides in the nucleus. The protein localises to the cytoplasm. Its subcellular location is the cytosol. In terms of biological role, repressor of jasmonate (JA) responses. Acts as a repressor of JA-induced resistance to the bacterial blight pathogen Xanthomonas oryzae pv. oryzae (Xoo). Regulates JA-induced accumulation of linalool at the transcriptional level of linalool synthase gene LIS. Linalool is important for resistance to bacterial blight pathogen Xoo. The chain is Protein TIFY 10c from Oryza sativa subsp. indica (Rice).